The primary structure comprises 405 residues: Aminodeoxyfutalosine deaminase (405 aa).

A divalent metal cation contacts are provided by His61 and His63. Positions 141, 145, and 179 each coordinate substrate. His206 serves as a coordination point for a divalent metal cation. Residue Glu209 is the Proton donor of the active site. Asp306 contacts a divalent metal cation.

Belongs to the metallo-dependent hydrolases superfamily. It depends on a divalent metal cation as a cofactor.

It catalyses the reaction 6-amino-6-deoxyfutalosine + H2O + H(+) = futalosine + NH4(+). The protein operates within quinol/quinone metabolism; menaquinone biosynthesis. In terms of biological role, catalyzes the deamination of aminodeoxyfutalosine (AFL) into futalosine (FL), a step in the biosynthesis of menaquinone (MK, vitamin K2). To a lesser extent, can also deaminate 5'-methylthioadenosine. The chain is Aminodeoxyfutalosine deaminase from Nitratiruptor sp. (strain SB155-2).